Here is a 194-residue protein sequence, read N- to C-terminus: ATP synthase subunit 5, mitochondrial (194 aa).

In terms of assembly, F-type ATP synthases have 2 components, the catalytic core F(1) and the membrane-embedded component F(0), linked together by a central stalk and a peripheral stalk. The central stalk, also called rotor shaft, is often seen as part of F(1). The peripheral stalk is seen as part of F(0). F(0) contains the membrane channel next to the rotor. F-type ATP synthases form dimers but each monomer functions independently in ATP generation. The dimer consists of 18 different polypeptides: ATP1 (subunit alpha, part of F(1), 3 molecules per monomer), ATP2 (subunit beta, part of F(1), 3 molecules per monomer), ATP3 (subunit gamma, part of the central stalk), ATP4 (subunit b, part of the peripheral stalk), ATP5/OSCP (subunit 5/OSCP, part of the peripheral stalk), ATP6 (subunit a, part of the peripheral stalk), ATP7 (subunit d, part of the peripheral stalk), ATP8 (subunit 8, part of the peripheral stalk), OLI1 (subunit c, part of the rotor, 10 molecules per monomer), ATP14 (subunit h, part of the peripheral stalk), ATP15 (subunit epsilon, part of the central stalk), ATP16 (subunit delta, part of the central stalk), ATP17 (subunit f, part of the peripheral stalk), ATP18 (subunit i/j, part of the peripheral stalk). Dimer-specific subunits are ATP19 (subunit k, at interface between monomers), ATP20 (subunit g, at interface between monomers), TIM11 (subunit e, at interface between monomers). Also contains subunit L.

Its subcellular location is the mitochondrion inner membrane. In terms of biological role, mitochondrial membrane ATP synthase (F(1)F(0) ATP synthase or Complex V) produces ATP from ADP in the presence of a proton gradient across the membrane which is generated by electron transport complexes of the respiratory chain. F-type ATP synthases consist of two structural domains, F(1) - containing the extramembraneous catalytic core, and F(0) - containing the membrane proton channel, linked together by a central stalk and a peripheral stalk. During catalysis, ATP synthesis in the catalytic domain of F(1) is coupled via a rotary mechanism of the central stalk subunits to proton translocation. Part of the complex F(0) domain and the peripheral stalk, which acts as a stator to hold the catalytic alpha/ATP1(3)beta/ATP2(3) subcomplex and subunit a/ATP6 static relative to the rotary elements. In Pichia angusta (Yeast), this protein is ATP synthase subunit 5, mitochondrial.